Reading from the N-terminus, the 632-residue chain is Chaperone protein HtpG (632 aa).

Residues 1–339 are a; substrate-binding; sequence MAHETMSFQA…SADLPLNVSR (339 aa). The b stretch occupies residues 340-559; that stretch reads EILQESRDVK…DNDMSGYLQR (220 aa). The interval 560–632 is c; it reads MLKAAGQNAP…TNALLLSRAA (73 aa).

It belongs to the heat shock protein 90 family. As to quaternary structure, homodimer.

The protein resides in the cytoplasm. Molecular chaperone. Has ATPase activity. The protein is Chaperone protein HtpG of Burkholderia lata (strain ATCC 17760 / DSM 23089 / LMG 22485 / NCIMB 9086 / R18194 / 383).